We begin with the raw amino-acid sequence, 1560 residues long: BRD4-interacting chromatin-remodeling complex-associated protein (1560 aa).

6 disordered regions span residues 53–99, 624–688, 723–949, 974–1028, 1049–1075, and 1215–1300; these read VQEA…GADQ, APQA…ATPT, IVSA…VTTP, NKAG…TGLP, KAAS…KPPT, and SSEG…IKTY. Residues 86–96 are compositionally biased toward gly residues; it reads ATGGGGGGSGG. Residues 624-664 are compositionally biased toward low complexity; that stretch reads APQAPPAVSTPLPLGLQQPQAQQPPQAPTPQAAAPPQATTP. A compositionally biased stretch (pro residues) spans 726-736; sequence APPPAQDPAPA. A compositionally biased stretch (low complexity) spans 747 to 780; it reads PQAPDSQASPAPAPQIPAAAPLKGPGPSSSPSLP. Pro residues-rich tracts occupy residues 791 to 806, 814 to 831, and 843 to 880; these read LPSP…PPSR, PSEP…PPTL, and VPPP…PHLP. Residues 881 to 896 are compositionally biased toward low complexity; the sequence is PSSTSSAVASSSETSS. Position 919 is a phosphoserine (Ser919). Position 921 is a phosphothreonine (Thr921). Positions 932 to 941 are enriched in pro residues; the sequence is PAAPPPPPPR. The span at 1005–1028 shows a compositional bias: low complexity; that stretch reads APSGTPTAPSHAPAPAPMAATGLP. Lys1057 is subject to N6-acetyllysine. Residues 1227 to 1236 are compositionally biased toward polar residues; the sequence is LSSSAPGAST. Residues 1264–1281 are compositionally biased toward low complexity; that stretch reads ASSSLSSSSSSSSAASSL. A Glycyl lysine isopeptide (Lys-Gly) (interchain with G-Cter in SUMO2) cross-link involves residue Lys1313. Disordered regions lie at residues 1324 to 1424 and 1440 to 1560; these read NTAL…VDEA and YQRM…TLTR. Residues 1331–1356 show a composition bias toward pro residues; that stretch reads HQPPPPPATLKVAEPPPRPPPPPPPT. Over residues 1401-1412 the composition is skewed to low complexity; sequence PEGTPAGRARGG. Position 1413 is a phosphoserine (Ser1413). The segment covering 1485–1515 has biased composition (polar residues); that stretch reads ASFSSDSPQDDTLTEHLQSAIDSILNLQQAP.

In terms of assembly, component of the multiprotein chromatin-remodeling complexes SWI/SNF: SWI/SNF-A (BAF), SWI/SNF-B (PBAF) and related complexes. The canonical complex contains a catalytic subunit (either SMARCA4/BRG1/BAF190A or SMARCA2/BRM/BAF190B) and at least SMARCE1, ACTL6A/BAF53, SMARCC1/BAF155, SMARCC2/BAF170, and SMARCB1/SNF5/BAF47. Other subunits specific to each of the complexes may also be present permitting several possible combinations developmentally and tissue specific. Component of the SWI/SNF (GBAF) subcomplex, which includes at least BICRA or BICRAL (mutually exclusive), BRD9, SS18, the core BAF subunits, SMARCA2/BRM, SMARCA4/BRG1/BAF190A, ACTL6A/BAF53, SMARCC1/BAF155, and SMARCD1/BAF60A. Interacts with BRD4; the interaction bridges BRD4 to the GBAF complex. Expressed at moderate levels in heart, brain, placenta, skeletal muscle, and pancreas, and at lower levels in lung, liver and kidney.

It localises to the nucleus. Its function is as follows. Component of SWI/SNF chromatin remodeling subcomplex GBAF that carries out key enzymatic activities, changing chromatin structure by altering DNA-histone contacts within a nucleosome in an ATP-dependent manner. May play a role in BRD4-mediated gene transcription. The protein is BRD4-interacting chromatin-remodeling complex-associated protein of Homo sapiens (Human).